Reading from the N-terminus, the 166-residue chain is MSNEVKKNEELIEKLVSVKRHSKTVKGGRIMSFAALTVVGDGKGRIGVGRGKSREVPAAIQKAMENAKKNMVSVNLNNDTLWYPVMSNHGASKVFMQPASAGTGIIAGGAMRSVFEAVGVHNVLAKTYGSTNPANVVRATIAGLAKIKSPDEIAEKRGLSVEEIQG.

Positions 11 to 74 (LIEKLVSVKR…ENAKKNMVSV (64 aa)) constitute an S5 DRBM domain.

This sequence belongs to the universal ribosomal protein uS5 family. Part of the 30S ribosomal subunit. Contacts proteins S4 and S8.

With S4 and S12 plays an important role in translational accuracy. Its function is as follows. Located at the back of the 30S subunit body where it stabilizes the conformation of the head with respect to the body. This chain is Small ribosomal subunit protein uS5, found in Francisella tularensis subsp. tularensis (strain FSC 198).